Reading from the N-terminus, the 650-residue chain is DNA gyrase subunit B (650 aa).

Positions 400–414 (RRSQEARELTRRKSP) are enriched in basic and acidic residues. A disordered region spans residues 400–422 (RRSQEARELTRRKSPFDSGSLPG). Positions 435–549 (SELYIVEGDS…QGNIFIAQPP (115 aa)) constitute a Toprim domain. Residues Glu-441, Asp-514, and Asp-516 each contribute to the Mg(2+) site.

It belongs to the type II topoisomerase GyrB family. In terms of assembly, heterotetramer, composed of two GyrA and two GyrB chains. In the heterotetramer, GyrA contains the active site tyrosine that forms a transient covalent intermediate with DNA, while GyrB binds cofactors and catalyzes ATP hydrolysis. Mg(2+) is required as a cofactor. The cofactor is Mn(2+). Requires Ca(2+) as cofactor.

The protein resides in the cytoplasm. The enzyme catalyses ATP-dependent breakage, passage and rejoining of double-stranded DNA.. Functionally, a type II topoisomerase that negatively supercoils closed circular double-stranded (ds) DNA in an ATP-dependent manner to modulate DNA topology and maintain chromosomes in an underwound state. Negative supercoiling favors strand separation, and DNA replication, transcription, recombination and repair, all of which involve strand separation. Also able to catalyze the interconversion of other topological isomers of dsDNA rings, including catenanes and knotted rings. Type II topoisomerases break and join 2 DNA strands simultaneously in an ATP-dependent manner. The polypeptide is DNA gyrase subunit B (Mycoplasma genitalium (strain ATCC 33530 / DSM 19775 / NCTC 10195 / G37) (Mycoplasmoides genitalium)).